Here is a 307-residue protein sequence, read N- to C-terminus: Auxin-induced protein PCNT115 (307 aa).

Y64 acts as the Proton donor in catalysis. Substrate is bound at residue H136. Position 215–225 (215–225 (SPLGRGFLSSG)) interacts with NADP(+).

This sequence belongs to the aldo/keto reductase family. Aldo/keto reductase 2 subfamily.

This chain is Auxin-induced protein PCNT115, found in Nicotiana tabacum (Common tobacco).